A 278-amino-acid polypeptide reads, in one-letter code: Diaminopimelate epimerase (278 aa).

Residues Asn13 and Asn66 each coordinate substrate. The active-site Proton donor is Cys75. Substrate contacts are provided by residues 76 to 77, Asn162, Asn195, and 213 to 214; these read GN and ER. Cys222 functions as the Proton acceptor in the catalytic mechanism. Substrate is bound at residue 223 to 224; sequence GT.

Belongs to the diaminopimelate epimerase family. Homodimer.

The protein localises to the cytoplasm. The catalysed reaction is (2S,6S)-2,6-diaminopimelate = meso-2,6-diaminopimelate. It functions in the pathway amino-acid biosynthesis; L-lysine biosynthesis via DAP pathway; DL-2,6-diaminopimelate from LL-2,6-diaminopimelate: step 1/1. Functionally, catalyzes the stereoinversion of LL-2,6-diaminopimelate (L,L-DAP) to meso-diaminopimelate (meso-DAP), a precursor of L-lysine and an essential component of the bacterial peptidoglycan. The sequence is that of Diaminopimelate epimerase from Trichodesmium erythraeum (strain IMS101).